The following is a 611-amino-acid chain: Dihydroxy-acid dehydratase (611 aa).

D81 serves as a coordination point for Mg(2+). C122 is a binding site for [2Fe-2S] cluster. Mg(2+) contacts are provided by D123 and K124. K124 carries the N6-carboxylysine modification. Position 195 (C195) interacts with [2Fe-2S] cluster. E491 is a Mg(2+) binding site. The active-site Proton acceptor is the S517.

This sequence belongs to the IlvD/Edd family. Homodimer. [2Fe-2S] cluster is required as a cofactor. Requires Mg(2+) as cofactor.

The catalysed reaction is (2R)-2,3-dihydroxy-3-methylbutanoate = 3-methyl-2-oxobutanoate + H2O. It carries out the reaction (2R,3R)-2,3-dihydroxy-3-methylpentanoate = (S)-3-methyl-2-oxopentanoate + H2O. The protein operates within amino-acid biosynthesis; L-isoleucine biosynthesis; L-isoleucine from 2-oxobutanoate: step 3/4. Its pathway is amino-acid biosynthesis; L-valine biosynthesis; L-valine from pyruvate: step 3/4. Functionally, functions in the biosynthesis of branched-chain amino acids. Catalyzes the dehydration of (2R,3R)-2,3-dihydroxy-3-methylpentanoate (2,3-dihydroxy-3-methylvalerate) into 2-oxo-3-methylpentanoate (2-oxo-3-methylvalerate) and of (2R)-2,3-dihydroxy-3-methylbutanoate (2,3-dihydroxyisovalerate) into 2-oxo-3-methylbutanoate (2-oxoisovalerate), the penultimate precursor to L-isoleucine and L-valine, respectively. In Brucella anthropi (strain ATCC 49188 / DSM 6882 / CCUG 24695 / JCM 21032 / LMG 3331 / NBRC 15819 / NCTC 12168 / Alc 37) (Ochrobactrum anthropi), this protein is Dihydroxy-acid dehydratase.